A 211-amino-acid polypeptide reads, in one-letter code: Ras-related protein Rab-38 (211 aa).

Residues glycine 19, valine 20, glycine 21, lysine 22, threonine 23, serine 24, serine 35, serine 36, tyrosine 38, and threonine 41 each coordinate GTP. Threonine 23 contributes to the Mg(2+) binding site. The Switch 1 signature appears at 32–46 (QNFSSHYRATIGVDF). Threonine 41 and aspartate 65 together coordinate Mg(2+). Glycine 68, lysine 128, aspartate 130, alanine 160, and lysine 161 together coordinate GTP. Positions 68 to 81 (GQERFGNMTRVYYR) match the Switch 2 motif. Cysteine 205 carries S-palmitoyl cysteine lipidation. Cysteine 208 carries S-geranylgeranyl cysteine lipidation.

It belongs to the small GTPase superfamily. Rab family. Interacts with ANKRD27. Mg(2+) is required as a cofactor.

The protein resides in the cell membrane. Its subcellular location is the cytoplasmic vesicle. It localises to the phagosome. The protein localises to the phagosome membrane. It is found in the melanosome. The protein resides in the melanosome membrane. The enzyme catalyses GTP + H2O = GDP + phosphate + H(+). Its activity is regulated as follows. Regulated by guanine nucleotide exchange factors (GEFs) including the BLOC-3 complex composed of HPS1 and HPS4 which promote the exchange of bound GDP for free GTP. Regulated by GTPase activating proteins (GAPs) including SGSM2 which increase the GTP hydrolysis activity. Inhibited by GDP dissociation inhibitors (GDIs). Its function is as follows. The small GTPases Rab are key regulators of intracellular membrane trafficking, from the formation of transport vesicles to their fusion with membranes. Rabs cycle between an inactive GDP-bound form and an active GTP-bound form that is able to recruit to membranes different sets of downstream effectors directly responsible for vesicle formation, movement, tethering and fusion. RAB38 plays a role in the maturation of phagosomes that engulf pathogens, such as S.aureus and Mycobacterium. May be involved in melanosomal transport and docking. Involved in the proper sorting of TYRP1. Involved in peripheral melanosomal distribution of TYRP1 in melanocytes; the function, which probably is implicating vesicle-trafficking, includes cooperation with ANKRD27 and VAMP7. Plays an important role in the control of melanin production and melanosome biogenesis. In concert with RAB32, regulates the proper trafficking of melanogenic enzymes TYR, TYRP1 and DCT/TYRP2 to melanosomes in melanocytes. The protein is Ras-related protein Rab-38 of Mus musculus (Mouse).